Reading from the N-terminus, the 416-residue chain is Gamma-glutamyl phosphate reductase (416 aa).

Belongs to the gamma-glutamyl phosphate reductase family.

It localises to the cytoplasm. It carries out the reaction L-glutamate 5-semialdehyde + phosphate + NADP(+) = L-glutamyl 5-phosphate + NADPH + H(+). The protein operates within amino-acid biosynthesis; L-proline biosynthesis; L-glutamate 5-semialdehyde from L-glutamate: step 2/2. Functionally, catalyzes the NADPH-dependent reduction of L-glutamate 5-phosphate into L-glutamate 5-semialdehyde and phosphate. The product spontaneously undergoes cyclization to form 1-pyrroline-5-carboxylate. The sequence is that of Gamma-glutamyl phosphate reductase from Vibrio parahaemolyticus serotype O3:K6 (strain RIMD 2210633).